The sequence spans 226 residues: UPF0173 metal-dependent hydrolase Tpet_1587 (226 aa).

This sequence belongs to the UPF0173 family.

The sequence is that of UPF0173 metal-dependent hydrolase Tpet_1587 from Thermotoga petrophila (strain ATCC BAA-488 / DSM 13995 / JCM 10881 / RKU-1).